Reading from the N-terminus, the 155-residue chain is Transcriptional repressor NrdR (155 aa).

A zinc finger spans residues 3–34 (CPFCGNIDTQVKDSRPAEDHVSIRRRRFCPAC). Positions 49 to 139 (LVVIKSSGKR…VYKNFQAADD (91 aa)) constitute an ATP-cone domain.

It belongs to the NrdR family. Zn(2+) serves as cofactor.

In terms of biological role, negatively regulates transcription of bacterial ribonucleotide reductase nrd genes and operons by binding to NrdR-boxes. This is Transcriptional repressor NrdR from Cereibacter sphaeroides (strain ATCC 17029 / ATH 2.4.9) (Rhodobacter sphaeroides).